We begin with the raw amino-acid sequence, 352 residues long: Phosphoribosylformylglycinamidine cyclo-ligase (352 aa).

This sequence belongs to the AIR synthase family.

The protein resides in the cytoplasm. It carries out the reaction 2-formamido-N(1)-(5-O-phospho-beta-D-ribosyl)acetamidine + ATP = 5-amino-1-(5-phospho-beta-D-ribosyl)imidazole + ADP + phosphate + H(+). Its pathway is purine metabolism; IMP biosynthesis via de novo pathway; 5-amino-1-(5-phospho-D-ribosyl)imidazole from N(2)-formyl-N(1)-(5-phospho-D-ribosyl)glycinamide: step 2/2. The chain is Phosphoribosylformylglycinamidine cyclo-ligase from Ectopseudomonas mendocina (strain ymp) (Pseudomonas mendocina).